Reading from the N-terminus, the 306-residue chain is MSGGLDVLQMKEEDVLKFLAAGTHLGGTNLDFQMEQYIYKRKSDGIYIINLKRTWEKLLLAARAIVAIENPADVCVISSRNTGQRAVLKFASASGATPIAGRFTPGTFTNQIQAAFREPRLLVVTDPRADHQPITEASYVNIPTIALCNTDSPLRYVDIAIPCNNKGAHSVGLMWWMLAREVLRMRGTISREHPWEVMPDLYFYRDPEEIEKEEQAAAEKATTKEEFQGEWTAPVAEFPQAEVADWSEGVQVPSVPIQQFTAERTDVPPAPKPTEDWSTQPASTDDWSAAPTAQASEWTGTTTEWS.

S2 carries the N-acetylserine modification. 2 laminin-binding regions span residues 161–180 (IPCN…MLAR) and 205–229 (RDPE…EFQG). [DE]-W-[ST] repeat units lie at residues 230 to 232 (EWT), 245 to 247 (DWS), 276 to 278 (DWS), 286 to 288 (DWS), and 304 to 306 (EWS). Positions 242–306 (EVADWSEGVQ…EWTGTTTEWS (65 aa)) are laminin-binding. The segment at 247–306 (SEGVQVPSVPIQQFTAERTDVPPAPKPTEDWSTQPASTDDWSAAPTAQASEWTGTTTEWS) is disordered. Residues 276–306 (DWSTQPASTDDWSAAPTAQASEWTGTTTEWS) are compositionally biased toward polar residues.

It belongs to the universal ribosomal protein uS2 family. In terms of assembly, monomer (37LRP) and homodimer (67LR). Component of the small ribosomal subunit. Mature ribosomes consist of a small (40S) and a large (60S) subunit. The 40S subunit contains about 33 different proteins and 1 molecule of RNA (18S). The 60S subunit contains about 49 different proteins and 3 molecules of RNA (28S, 5.8S and 5S). Interacts with rps21. Interacts with several laminins including at least lamb1. Interacts with mdk. Acylated. Acylation may be a prerequisite for conversion of the monomeric 37 kDa laminin receptor precursor (37LRP) to the mature dimeric 67 kDa laminin receptor (67LR), and may provide a mechanism for membrane association. In terms of processing, cleaved by stromelysin-3 (ST3) at the cell surface. Cleavage by stromelysin-3 may be a mechanism to alter cell-extracellular matrix interactions.

It localises to the cell membrane. It is found in the cytoplasm. Its subcellular location is the nucleus. Functionally, required for the assembly and/or stability of the 40S ribosomal subunit. Required for the processing of the 20S rRNA-precursor to mature 18S rRNA in a late step of the maturation of 40S ribosomal subunits. Also functions as a cell surface receptor for laminin. Plays a role in cell adhesion to the basement membrane and in the consequent activation of signaling transduction pathways. May play a role in cell fate determination and tissue morphogenesis. In Xenopus laevis (African clawed frog), this protein is Small ribosomal subunit protein uS2 (rpsa).